The sequence spans 58 residues: Large ribosomal subunit protein uL30 (58 aa).

Belongs to the universal ribosomal protein uL30 family. In terms of assembly, part of the 50S ribosomal subunit.

In Wigglesworthia glossinidia brevipalpis, this protein is Large ribosomal subunit protein uL30.